A 201-amino-acid chain; its full sequence is Potassium-transporting ATPase KdpC subunit (201 aa).

A helical membrane pass occupies residues Val-10–Ile-30.

This sequence belongs to the KdpC family. The system is composed of three essential subunits: KdpA, KdpB and KdpC.

It localises to the cell inner membrane. Functionally, part of the high-affinity ATP-driven potassium transport (or Kdp) system, which catalyzes the hydrolysis of ATP coupled with the electrogenic transport of potassium into the cytoplasm. This subunit acts as a catalytic chaperone that increases the ATP-binding affinity of the ATP-hydrolyzing subunit KdpB by the formation of a transient KdpB/KdpC/ATP ternary complex. The chain is Potassium-transporting ATPase KdpC subunit from Methylorubrum extorquens (strain PA1) (Methylobacterium extorquens).